We begin with the raw amino-acid sequence, 805 residues long: MSSSSWLLLSLVAVTTAQSLTEENAKTFLNNFNQEAEDLSYQSSLASWNYNTNITEENAQKMSEAAAKWSAFYEEQSKTAQSFSLQEIQTPIIKRQLQALQQSGSSALSADKNKQLNTILNTMSTIYSTGKVCNPKNPQECLLLEPGLDEIMATSTDYNSRLWAWEGWRAEVGKQLRPLYEEYVVLKNEMARANNYNDYGDYWRGDYEAEGADGYNYNRNQLIEDVERTFAEIKPLYEHLHAYVRRKLMDTYPSYISPTGCLPAHLLGDMWGRFWTNLYPLTVPFAQKPNIDVTDAMMNQGWDAERIFQEAEKFFVSVGLPHMTQGFWANSMLTEPADGRKVVCHPTAWDLGHGDFRIKMCTKVTMDNFLTAHHEMGHIQYDMAYARQPFLLRNGANEGFHEAVGEIMSLSAATPKHLKSIGLLPSDFQEDSETEINFLLKQALTIVGTLPFTYMLEKWRWMVFRGEIPKEQWMKKWWEMKREIVGVVEPLPHDETYCDPASLFHVSNDYSFIRYYTRTIYQFQFQEALCQAAKYNGSLHKCDISNSTEAGQKLLKMLSLGNSEPWTKALENVVGARNMDVKPLLNYFQPLFDWLKEQNRNSFVGWNTEWSPYADQSIKVRISLKSALGANAYEWTNNEMFLFRSSVAYAMRKYFSIIKNQTVPFLEEDVRVSDLKPRVSFYFFVTSPQNVSDVIPRSEVEDAIRMSRGRINDVFGLNDNSLEFLGIHPTLEPPYQPPVTIWLIIFGVVMALVVVGIIILIVTGIKGRKKKNETKREENPYDSMDIGKGESNAGFQNSDDAQTSF.

A signal peptide spans 1 to 17; it reads MSSSSWLLLSLVAVTTA. Over 18–740 the chain is Extracellular; the sequence is QSLTEENAKT…LEPPYQPPVT (723 aa). In terms of domain architecture, Peptidase M2 spans 19–607; sequence SLTEENAKTF…QNRNSFVGWN (589 aa). N-linked (GlcNAc...) asparagine glycosylation occurs at N53. A disulfide bridge connects residues C133 and C141. R169 provides a ligand contact to chloride. Substrate is bound by residues R273 and 345–346; that span reads HP. C344 and C361 are oxidised to a cystine. H374 serves as a coordination point for Zn(2+). E375 acts as the Proton acceptor in catalysis. 2 residues coordinate Zn(2+): H378 and E402. 2 residues coordinate chloride: W477 and K481. The Proton donor role is filled by H505. Residue Y515 participates in substrate binding. An intrachain disulfide couples C530 to C542. N-linked (GlcNAc...) asparagine glycans are attached at residues N536 and N546. One can recognise a Collectrin-like domain in the interval 614–805; that stretch reads ADQSIKVRIS…QNSDDAQTSF (192 aa). Residues 652-659 are essential for cleavage by ADAM17; it reads RKYFSIIK. 2 N-linked (GlcNAc...) asparagine glycosylation sites follow: N660 and N690. An essential for cleavage by TMPRSS11D and TMPRSS2 region spans residues 697 to 716; the sequence is RSEVEDAIRMSRGRINDVFG. A helical transmembrane segment spans residues 741–761; it reads IWLIIFGVVMALVVVGIIILI. Residues 762 to 805 are Cytoplasmic-facing; the sequence is VTGIKGRKKKNETKREENPYDSMDIGKGESNAGFQNSDDAQTSF. The disordered stretch occupies residues 771–805; it reads KNETKREENPYDSMDIGKGESNAGFQNSDDAQTSF. The short motif at 778–786 is the LIR element; sequence ENPYDSMDI. Y781 is modified (phosphotyrosine). An Endocytic sorting signal motif is present at residues 781–784; it reads YDSM. The short motif at 781 to 785 is the SH2-binding element; that stretch reads YDSMD. S783 carries the phosphoserine modification. K788 participates in a covalent cross-link: Glycyl lysine isopeptide (Lys-Gly) (interchain with G-Cter in ubiquitin). A PTB motif is present at residues 792-795; that stretch reads NAGF. Polar residues predominate over residues 793–805; it reads AGFQNSDDAQTSF. The short motif at 803-805 is the PDZ-binding element; the sequence is TSF.

The protein belongs to the peptidase M2 family. Homodimer. Interacts with the catalytically active form of TMPRSS2. Interacts with SLC6A19; this interaction is essential for expression and function of SLC6A19 in intestine. Interacts with ITGA5:ITGB1. Probably interacts (via endocytic sorting signal motif) with AP2M1; the interaction is inhibited by phosphorylation of Tyr-781. Interacts (via PDZ-binding motif) with NHERF1 (via PDZ domains); the interaction may enhance ACE2 membrane residence. In terms of assembly, (Microbial infection) Weakly interacts with SARS-CoV S protein. It depends on Zn(2+) as a cofactor. Chloride serves as cofactor. Proteolytic cleavage by ADAM17 generates a secreted form. Also cleaved by serine proteases: TMPRSS2, TMPRSS11D and HPN/TMPRSS1. In terms of processing, phosphorylated. Phosphorylation at Tyr-781 probably inhibits interaction with AP2M1 and enables interactions with proteins containing SH2 domains. Post-translationally, ubiquitinated. Ubiquitinated on Lys-788 via 'Lys-48'-linked ubiquitin. 'Lys-48'-linked deubiquitinated by USP50 on the Lys-788; leading to its stabilization. As to expression, expressed in heart, kidney and forebrain (at protein level). Expressed in the small intestine, with expression in the intestinal brush border (at protein level). Ubiquitously expressed, with highest levels in ileum, kidney and lung. In lung, expressed on vascular endothelial and airway epithelial cells. Also expressed at high levels in lung secretory club and goblet cells as well as in alveolar type 2 cells.

The protein resides in the secreted. It is found in the cell membrane. The protein localises to the cytoplasm. It localises to the cell projection. Its subcellular location is the cilium. The protein resides in the apical cell membrane. It carries out the reaction angiotensin II + H2O = angiotensin-(1-7) + L-phenylalanine. The catalysed reaction is angiotensin I + H2O = angiotensin-(1-9) + L-leucine. The enzyme catalyses bradykinin(1-8) + H2O = bradykinin(1-7) + L-phenylalanine. It catalyses the reaction neurotensin + H2O = neurotensin-(1-12) + L-leucine. It carries out the reaction kinetensin + H2O = kinetensin-(1-8) + L-leucine. The catalysed reaction is dynorphin A-(1-13) + H2O = dynorphin A-(1-12) + L-lysine. The enzyme catalyses apelin-13 + H2O = apelin-12 + L-phenylalanine. It catalyses the reaction [Pyr1]apelin-13 + H2O = [Pyr1]apelin-12 + L-phenylalanine. It carries out the reaction apelin-17 + H2O = apelin-16 + L-phenylalanine. Functionally, essential counter-regulatory carboxypeptidase of the renin-angiotensin hormone system that is a critical regulator of blood volume, systemic vascular resistance, and thus cardiovascular homeostasis. Converts angiotensin I to angiotensin 1-9, a nine-amino acid peptide with anti-hypertrophic effects in cardiomyocytes, and angiotensin II to angiotensin 1-7, which then acts as a beneficial vasodilator and anti-proliferation agent, counterbalancing the actions of the vasoconstrictor angiotensin II. Also removes the C-terminal residue from three other vasoactive peptides, neurotensin, kinetensin, and des-Arg bradykinin, but is not active on bradykinin. Also cleaves other biological peptides, such as apelins, casomorphins and dynorphin A. By cleavage of angiotensin II, may be an important regulator of heart function. By cleavage of angiotensin II, may also have a protective role in acute lung injury. Plays an important role in amino acid transport by acting as binding partner of amino acid transporter SLC6A19, regulating its trafficking on the cell surface and its activity. In Mus musculus (Mouse), this protein is Angiotensin-converting enzyme 2 (Ace2).